The following is a 78-amino-acid chain: MSRVCQLTGTRANNGMAVSHSHIRTKKLQQANLQQRRLWWAEGKRWINLRITTRALKTIQKKGLGAYARSLGINLAKL.

This sequence belongs to the bacterial ribosomal protein bL28 family.

The polypeptide is Large ribosomal subunit protein bL28 (Synechococcus sp. (strain CC9311)).